We begin with the raw amino-acid sequence, 162 residues long: Peptidyl-prolyl cis-trans isomerase-like 1 (162 aa).

One can recognise a PPIase cyclophilin-type domain in the interval 1–155 (MTTNIVLETT…EEVKIVKARV (155 aa)).

Belongs to the cyclophilin-type PPIase family. PPIL1 subfamily.

It carries out the reaction [protein]-peptidylproline (omega=180) = [protein]-peptidylproline (omega=0). PPIases accelerate the folding of proteins. It catalyzes the cis-trans isomerization of proline imidic peptide bonds in oligopeptides. This is Peptidyl-prolyl cis-trans isomerase-like 1 (CYP1) from Gibberella zeae (strain ATCC MYA-4620 / CBS 123657 / FGSC 9075 / NRRL 31084 / PH-1) (Wheat head blight fungus).